The sequence spans 707 residues: Zinc finger CCHC domain-containing protein 8 (707 aa).

A2 bears the N-acetylalanine mark. Positions 16–44 (FDHPEESIPKPVHTRFKDDDGDEEDENGV) are disordered. Residues 34–43 (DDGDEEDENG) show a composition bias toward acidic residues. Residues 45 to 80 (GDAELRERLRQCEETIEQLRAENQELKRKLNILTRP) are a coiled coil. Residues 227-244 (PHCFNCGSEEHQMKDCPM) form a CCHC-type zinc finger. RBM7 binding regions lie at residues 286–299 (FKPG…QDAL) and 309–324 (FIYR…GWLK). T342 bears the Phosphothreonine mark. Disordered regions lie at residues 409–518 (APGV…LTLE), 531–607 (LEQA…TSLC), and 641–660 (QKLF…HSPI). K413 is covalently cross-linked (Glycyl lysine isopeptide (Lys-Gly) (interchain with G-Cter in SUMO2)). Residues 456–465 (SQSSESFQFQ) are compositionally biased toward low complexity. Over residues 466-496 (PPLPPDTPPLPRGTPPPVFTPPLPKGTPPLT) the composition is skewed to pro residues. Residues T472, T479, and T485 each carry the phosphothreonine modification. T492 bears the Phosphothreonine; by GSK3 mark. The stretch at 516 to 539 (TLEELEEQQRRIWAALEQAESVNS) forms a coiled coil. Polar residues predominate over residues 549 to 559 (LTGNSVASSPC). T577 carries the post-translational modification Phosphothreonine. S598 carries the phosphoserine modification. Residues 598–607 (SPDSEVTSLC) are compositionally biased toward polar residues. T648 carries the phosphothreonine modification. 3 positions are modified to phosphoserine: S649, S658, and S695. The MTREX binding stretch occupies residues 659–707 (PIPDMSKFATGITPFEFENMAESTGMYLRIRSLLKNSPRNQQKNKKASE).

This sequence belongs to the ZCCHC8 family. As to quaternary structure, component of a nuclear TRAMP-like complex, an ATP-dependent exosome regulatory complex consisting of a helicase (MTREX), an oligadenylate polymerase (TENT4B or TENT4A), and a substrate specific RNA-binding factor (ZCCHC7 or ZCCHC8). Several TRAMP-like complexes exist with specific compositions and are associated with nuclear, or nucleolar RNA exosomes. Identified in the spliceosome C complex. Component of the nuclear exosome targeting (NEXT) complex composed of MTREX, ZCCHC8, and RBM7 that directs a subset of non-coding short-lived RNAs for exosomal degradation. Interacts with proteins involved in RNA processing and degradation such as MTREX and RBM7; interaction with MTREX enhances MTREX RNA helicase activity and bridges between RBM7 and MTREX. Interacts with TERC, the telomerase RNA component. Phosphorylation at Thr-492 by GSK3 is triggered in cells entering mitosis; this phosphorylation is greatly enhanced by nocodazole treatment, but reduced by lithium.

It is found in the nucleus. The protein localises to the nucleoplasm. Its function is as follows. Scaffolding subunit of the trimeric nuclear exosome targeting (NEXT) complex that is involved in the surveillance and turnover of aberrant transcripts and non-coding RNAs. NEXT functions as an RNA exosome cofactor that directs a subset of non-coding short-lived RNAs for exosomal degradation. May be involved in pre-mRNA splicing. It is required for 3'-end maturation of telomerase RNA component (TERC), TERC 3'-end targeting to the nuclear RNA exosome, and for telomerase function. The polypeptide is Zinc finger CCHC domain-containing protein 8 (ZCCHC8) (Homo sapiens (Human)).